Here is a 222-residue protein sequence, read N- to C-terminus: GTP cyclohydrolase 1 (222 aa).

Residues cysteine 111, histidine 114, and cysteine 182 each contribute to the Zn(2+) site.

It belongs to the GTP cyclohydrolase I family. As to quaternary structure, toroid-shaped homodecamer, composed of two pentamers of five dimers.

The catalysed reaction is GTP + H2O = 7,8-dihydroneopterin 3'-triphosphate + formate + H(+). It functions in the pathway cofactor biosynthesis; 7,8-dihydroneopterin triphosphate biosynthesis; 7,8-dihydroneopterin triphosphate from GTP: step 1/1. In Salmonella choleraesuis (strain SC-B67), this protein is GTP cyclohydrolase 1.